Reading from the N-terminus, the 872-residue chain is Cadherin-1 (872 aa).

Residues 1–25 (MGLKRPWLLGAVVLLTLIQVQGGLA) form the signal peptide. Positions 26 to 148 (EWTQCRMGFS…SETGLKRQKR (123 aa)) are excised as a propeptide. 5 Cadherin domains span residues 148–256 (RDWV…DPVF), 257–370 (TQSV…PPVF), 371–481 (DPTQ…APIF), 482–589 (LPPV…GPFL), and 605–688 (VFTI…MQCE). Topologically, residues 149–701 (DWVIPPIIVS…AIAGGLGISA (553 aa)) are extracellular. Asn-209 carries an N-linked (GlcNAc...) asparagine glycan. Ca(2+)-binding residues include Asp-251 and Asp-282. Asn-456, Asn-552, Asn-631, and Asn-669 each carry an N-linked (GlcNAc...) asparagine glycan. The helical transmembrane segment at 702–722 (IVGILGGILALLLLLLLLLLF) threads the bilayer. Over 723-872 (VRRKKVVKEP…LADMYGGDED (150 aa)) the chain is Cytoplasmic. A disordered region spans residues 739-758 (ETRDNVFSYDEEGGGEEDQD). The segment covering 747–758 (YDEEGGGEEDQD) has biased composition (acidic residues).

As to quaternary structure, homodimer. As to expression, abundantly expressed in intestine, stomach, liver, kidney, skin and eye. Also expressed in heart, lung, testis, ovary, muscle and brain.

It localises to the cell junction. It is found in the adherens junction. The protein resides in the cell membrane. The protein localises to the endosome. Its subcellular location is the golgi apparatus. It localises to the trans-Golgi network. It is found in the cytoplasm. The protein resides in the desmosome. Cadherins are calcium-dependent cell adhesion proteins. They preferentially interact with themselves in a homophilic manner in connecting cells; cadherins may thus contribute to the sorting of heterogeneous cell types. Promotes organization of radial actin fiber structure and cellular response to contractile forces, via anchoring of radial actin fibers to CDH1 junction complexes at the cell membrane. E-cadherin is a ligand for integrin alpha-E/beta-7. This Xenopus laevis (African clawed frog) protein is Cadherin-1 (cdh1).